A 209-amino-acid polypeptide reads, in one-letter code: Uracil phosphoribosyltransferase (209 aa).

Residues R79, R104, and 131-139 contribute to the 5-phospho-alpha-D-ribose 1-diphosphate site; that span reads DPMLATGGS. Residues I194 and 199 to 201 each bind uracil; that span reads GDA. D200 provides a ligand contact to 5-phospho-alpha-D-ribose 1-diphosphate.

This sequence belongs to the UPRTase family. Mg(2+) is required as a cofactor.

It carries out the reaction UMP + diphosphate = 5-phospho-alpha-D-ribose 1-diphosphate + uracil. It functions in the pathway pyrimidine metabolism; UMP biosynthesis via salvage pathway; UMP from uracil: step 1/1. Allosterically activated by GTP. Catalyzes the conversion of uracil and 5-phospho-alpha-D-ribose 1-diphosphate (PRPP) to UMP and diphosphate. This is Uracil phosphoribosyltransferase from Streptococcus pneumoniae (strain ATCC BAA-255 / R6).